A 254-amino-acid polypeptide reads, in one-letter code: UPF0246 protein CPR_2119 (254 aa).

The protein belongs to the UPF0246 family.

This Clostridium perfringens (strain SM101 / Type A) protein is UPF0246 protein CPR_2119.